A 739-amino-acid polypeptide reads, in one-letter code: Poly(A) polymerase alpha (739 aa).

Over residues 1–17 (MPFPVTTQGSQQTQPPQ) the composition is skewed to low complexity. A disordered region spans residues 1–22 (MPFPVTTQGSQQTQPPQRHYGI). Residues serine 10 and serine 24 each carry the phosphoserine modification. ATP contacts are provided by residues 100 to 102 (FGS), threonine 109, 113 to 115 (DID), aspartate 167, lysine 228, tyrosine 237, and 246 to 247 (GV). Mg(2+)-binding residues include aspartate 113, aspartate 115, and aspartate 167. Residues lysine 444, lysine 445, lysine 506, and lysine 507 each participate in a glycyl lysine isopeptide (Lys-Gly) (interchain with G-Cter in SUMO) cross-link. Positions 490-507 (RKQLHQLLPSHVLQKRKK) match the Nuclear localization signal 1 motif. A ser/Thr-rich region spans residues 508–643 (HSTEGVKLTA…TKVPNPIVGV (136 aa)). Residues 523–534 (LDLSMDSDNSMS) are compositionally biased toward low complexity. A disordered region spans residues 523 to 725 (LDLSMDSDNS…SDIPALPANP (203 aa)). A compositionally biased stretch (polar residues) spans 535–557 (VPSPTSAMKTSPLNSSGSSQGRN). Residue serine 537 is modified to Phosphoserine; by MAPK. Position 558 is a phosphoserine (serine 558). The segment covering 566 to 582 (ASVTSIQASEVSVPQAN) has biased composition (polar residues). Low complexity-rich tracts occupy residues 583 to 594 (SSESPGGPSSES) and 611 to 622 (TVSRVVSSTRLV). Lysine 635 and lysine 644 each carry N6-acetyllysine. The Nuclear localization signal 2 signature appears at 644-659 (KRTSSPNKEESPKKTK). Basic and acidic residues-rich tracts occupy residues 650-660 (NKEESPKKTKT) and 676-686 (GHDKTETKEQV). Residues 671 to 739 (CLALSGHDKT…KNSIKLRLNR (69 aa)) form a required for interaction with NUDT21 region. Positions 691–715 (SAVQSETVPASASLLASQKTSSTDL) are enriched in polar residues. Position 730 is an N6-acetyllysine; alternate (lysine 730). Lysine 730 participates in a covalent cross-link: Glycyl lysine isopeptide (Lys-Gly) (interchain with G-Cter in SUMO); alternate. Serine 732 is modified (phosphoserine). Lysine 734 bears the N6-acetyllysine; alternate mark. Lysine 734 is covalently cross-linked (Glycyl lysine isopeptide (Lys-Gly) (interchain with G-Cter in SUMO); alternate).

Belongs to the poly(A) polymerase family. Monomer. Found in a complex with CPSF1, FIP1L1 and PAPOLA. Interacts with AHCYL1 and FIP1L1; the interaction with AHCYL1 seems to increase interaction with FIP1L1. Interacts with NUDT21; the interaction is diminished by acetylation. Interacts with KPNB1; the interaction promotes PAP nuclear import and is inhibited by acetylation of PAP. Requires Mg(2+) as cofactor. Mn(2+) serves as cofactor. Polysumoylated. Varying sumoylation depending on tissue- and cell-type. Highly sumoylated in bladder and NIH 3T3 cells. Sumoylation is required for nuclear localization and enhances PAP stability. Desumoylated by SENP1. Inhibits polymerase activity. In terms of processing, hyperphosphorylation on multiple CDK2 consensus and non-consensus sites in the C-terminal Ser/Thr-rich region represses PAP activity in late M-phase. Phosphorylation/dephosphorylation may regulate the interaction between PAP and CPSF. Post-translationally, acetylated in the C-terminus. Acetylation decreases interaction with NUDT21 and KPNB1, and inhibits nuclear localization through inhibiting binding to the importin alpha/beta complex. Expressed in brain, thymus, lung, kidney, bladder, testis and spleen.

It localises to the nucleus. It carries out the reaction RNA(n) + ATP = RNA(n)-3'-adenine ribonucleotide + diphosphate. Functionally, polymerase that creates the 3'-poly(A) tail of mRNA's. Also required for the endoribonucleolytic cleavage reaction at some polyadenylation sites. May acquire specificity through interaction with a cleavage and polyadenylation specificity factor (CPSF) at its C-terminus. The sequence is that of Poly(A) polymerase alpha (Papola) from Mus musculus (Mouse).